Consider the following 62-residue polypeptide: Large ribosomal subunit protein uL29 (62 aa).

It belongs to the universal ribosomal protein uL29 family.

This Oleidesulfovibrio alaskensis (strain ATCC BAA-1058 / DSM 17464 / G20) (Desulfovibrio alaskensis) protein is Large ribosomal subunit protein uL29.